A 216-amino-acid chain; its full sequence is Flagellar transcriptional regulator FlhC (216 aa).

Cys137, Cys140, Cys157, and Cys160 together coordinate Zn(2+).

It belongs to the FlhC family. In terms of assembly, heterohexamer composed of two FlhC and four FlhD subunits. Each FlhC binds a FlhD dimer, forming a heterotrimer, and a hexamer assembles by dimerization of two heterotrimers. Zn(2+) serves as cofactor.

It is found in the cytoplasm. Its function is as follows. Functions in complex with FlhD as a master transcriptional regulator that regulates transcription of several flagellar and non-flagellar operons by binding to their promoter region. Activates expression of class 2 flagellar genes, including fliA, which is a flagellum-specific sigma factor that turns on the class 3 genes. Also regulates genes whose products function in a variety of physiological pathways. The chain is Flagellar transcriptional regulator FlhC from Paraburkholderia atlantica.